A 75-amino-acid polypeptide reads, in one-letter code: UPF0352 protein YejL (75 aa).

The protein belongs to the UPF0352 family.

The protein is UPF0352 protein YejL of Escherichia coli O139:H28 (strain E24377A / ETEC).